Consider the following 1147-residue polypeptide: Myosin light chain kinase, smooth muscle (1147 aa).

The tract at residues 1–41 (MDFRANLQRQVKPKTVSEEERKVHSPQQVDFRSVLAKKGTP) is actin-binding. The interval 1–330 (MDFRANLQRQ…PPASPGTAPT (330 aa)) is disordered. A calmodulin-binding region spans residues 26 to 41 (PQQVDFRSVLAKKGTP). Over residues 43-55 (TPVPEKAPPPKPA) the composition is skewed to pro residues. 2 tandem repeats follow at residues 100–111 (SLKPVANAKPAE) and 112–123 (TLKPVANTKPAE). A 16 X 12 AA tandem repeats region spans residues 100 to 288 (SLKPVANAKP…KAVANAKPAE (189 aa)). The stretch at 124–132 (TLKPVANAE) is one 3; truncated repeat. A run of 13 repeats spans residues 133-144 (TLKPMGNAKPAE), 145-156 (SSKPVGNTKPAE), 157-168 (TLKPVGNTKPAE), 169-180 (TLKPVGNIKPAE), 181-192 (TLKPVGNIKPAE), 193-204 (TLKPVGNTKPTE), 205-216 (TLKPVANAKSAE), 217-228 (TLKPIANTKPAE), 229-240 (TLKPVGNAKPAE), 241-252 (TLKPVGNAKPAE), 253-264 (TLKPVGNAKPAE), 265-276 (TLKPVGNAKPAE), and 277-288 (TLKAVANAKPAE). An actin-binding (calcium/calmodulin-insensitive) region spans residues 292–692 (PAGKEELKKE…TVTVNTEQKV (401 aa)). Over residues 293 to 320 (AGKEELKKEVQNDVNCKREKAGAADNEK) the composition is skewed to basic and acidic residues. Ig-like C2-type domains follow at residues 329–417 (PTFK…CHVT) and 469–557 (PQIP…VNLT). The cysteines at positions 350 and 401 are disulfide-linked. Disordered regions lie at residues 424 to 476 (SENA…QFPE) and 644 to 678 (SEPSQESELTTVGEKPEEPKDEVEEVSDDDEKEPE). Positions 459-472 (PKTPPKAATPPQIP) are enriched in pro residues. Positions 565–657 (PAGTPCASDI…QESELTTVGE (93 aa)) constitute a Fibronectin type-III domain. Polar residues predominate over residues 644–653 (SEPSQESELT). Residues 662–677 (PKDEVEEVSDDDEKEP) show a composition bias toward acidic residues. The residue at position 670 (Ser670) is a Phosphoserine. A Phosphotyrosine; by ABL1 modification is found at Tyr681. The region spanning 696–951 (YDIEERLGSG…CTQCLQHPWL (256 aa)) is the Protein kinase domain. ATP is bound by residues 702–710 (LGSGKFGQV) and Lys725. Tyr807 carries the post-translational modification Phosphotyrosine; by ABL1. Catalysis depends on Asp817, which acts as the Proton acceptor. Residue Tyr867 is modified to Phosphotyrosine; by ABL1. Positions 943–1006 (TQCLQHPWLM…SGLSGRKSST (64 aa)) are calmodulin-binding. Phosphoserine occurs at positions 991, 992, 1004, 1005, and 1008. Residues 999–1019 (LSGRKSSTGSPTSPLTAERLE) are disordered. Residues 1002 to 1013 (RKSSTGSPTSPL) show a composition bias toward polar residues. Thr1010 carries the post-translational modification Phosphothreonine. Ser1011 is modified (phosphoserine). In terms of domain architecture, Ig-like C2-type 3 spans 1041–1130 (PYFSKTIRDL…GEATCTAELI (90 aa)). A disulfide bond links Cys1062 and Cys1114.

Belongs to the protein kinase superfamily. CAMK Ser/Thr protein kinase family. As to quaternary structure, all isoforms including Telokin bind calmodulin. Interacts with SVIL. Interacts with CTTN; this interaction is reduced during thrombin-induced endothelial cell (EC) contraction but is promoted by the barrier-protective agonist sphingosine 1-phosphate (S1P) within lamellipodia. A complex made of ABL1, CTTN and MYLK regulates cortical actin-based cytoskeletal rearrangement critical to sphingosine 1-phosphate (S1P)-mediated endothelial cell (EC) barrier enhancement. Binds to NAA10/ARD1 and PTK2B/PYK2. The cofactor is Mg(2+). Ca(2+) is required as a cofactor. The C-terminus is deglutamylated by AGTPBP1/CCP1, AGBL1/CCP4 and AGBL4/CCP6, leading to the formation of Myosin light chain kinase, smooth muscle, deglutamylated form. The consequences of C-terminal deglutamylation are unknown. In terms of processing, can probably be down-regulated by phosphorylation. Tyrosine phosphorylation by ABL1 increases kinase activity, reverses MLCK-mediated inhibition of Arp2/3-mediated actin polymerization, and enhances CTTN-binding. Phosphorylation by SRC promotes CTTN binding. In terms of tissue distribution, isoform Telokin is found in all smooth muscle tested except the aorta. It is not present in non-muscle tissue.

It localises to the cytoplasm. The protein localises to the cell projection. The protein resides in the lamellipodium. Its subcellular location is the cleavage furrow. It is found in the cytoskeleton. It localises to the stress fiber. It carries out the reaction L-seryl-[myosin light chain] + ATP = O-phospho-L-seryl-[myosin light chain] + ADP + H(+). The enzyme catalyses L-threonyl-[myosin light chain] + ATP = O-phospho-L-threonyl-[myosin light chain] + ADP + H(+). All catalytically active isoforms require binding to calcium and calmodulin for activation. In terms of biological role, calcium/calmodulin-dependent myosin light chain kinase implicated in smooth muscle contraction via phosphorylation of myosin light chains (MLC). Also regulates actin-myosin interaction through a non-kinase activity. Phosphorylates PTK2B/PYK2 and myosin light-chains. Involved in the inflammatory response (e.g. apoptosis, vascular permeability, leukocyte diapedesis), cell motility and morphology, airway hyperreactivity and other activities relevant to asthma. Required for tonic airway smooth muscle contraction that is necessary for physiological and asthmatic airway resistance. Necessary for gastrointestinal motility. Implicated in the regulation of endothelial as well as vascular permeability, probably via the regulation of cytoskeletal rearrangements. In the nervous system it has been shown to control the growth initiation of astrocytic processes in culture and to participate in transmitter release at synapses formed between cultured sympathetic ganglion cells. Critical participant in signaling sequences that result in fibroblast apoptosis. Plays a role in the regulation of epithelial cell survival. Required for epithelial wound healing, especially during actomyosin ring contraction during purse-string wound closure. Mediates RhoA-dependent membrane blebbing. Triggers TRPC5 channel activity in a calcium-dependent signaling, by inducing its subcellular localization at the plasma membrane. Promotes cell migration (including tumor cells) and tumor metastasis. PTK2B/PYK2 activation by phosphorylation mediates ITGB2 activation and is thus essential to trigger neutrophil transmigration during acute lung injury (ALI). May regulate optic nerve head astrocyte migration. Probably involved in mitotic cytoskeletal regulation. Regulates tight junction probably by modulating ZO-1 exchange in the perijunctional actomyosin ring. Mediates burn-induced microvascular barrier injury; triggers endothelial contraction in the development of microvascular hyperpermeability by phosphorylating MLC. Essential for intestinal barrier dysfunction. Mediates Giardia spp.-mediated reduced epithelial barrier function during giardiasis intestinal infection via reorganization of cytoskeletal F-actin and tight junctional ZO-1. Necessary for hypotonicity-induced Ca(2+) entry and subsequent activation of volume-sensitive organic osmolyte/anion channels (VSOAC) in cervical cancer cells. This chain is Myosin light chain kinase, smooth muscle (MYLK), found in Oryctolagus cuniculus (Rabbit).